Here is a 288-residue protein sequence, read N- to C-terminus: Bifunctional protein FolD (288 aa).

Residues 166 to 168 (GAS) and isoleucine 232 each bind NADP(+).

The protein belongs to the tetrahydrofolate dehydrogenase/cyclohydrolase family. In terms of assembly, homodimer.

It catalyses the reaction (6R)-5,10-methylene-5,6,7,8-tetrahydrofolate + NADP(+) = (6R)-5,10-methenyltetrahydrofolate + NADPH. The catalysed reaction is (6R)-5,10-methenyltetrahydrofolate + H2O = (6R)-10-formyltetrahydrofolate + H(+). It participates in one-carbon metabolism; tetrahydrofolate interconversion. Functionally, catalyzes the oxidation of 5,10-methylenetetrahydrofolate to 5,10-methenyltetrahydrofolate and then the hydrolysis of 5,10-methenyltetrahydrofolate to 10-formyltetrahydrofolate. The sequence is that of Bifunctional protein FolD from Salmonella arizonae (strain ATCC BAA-731 / CDC346-86 / RSK2980).